The sequence spans 215 residues: Oligoribonuclease (215 aa).

An Exonuclease domain is found at Leu5–Leu170. Tyr127 is an active-site residue. The tract at residues Leu196–Gly215 is disordered.

It belongs to the oligoribonuclease family.

The protein localises to the cytoplasm. Its function is as follows. 3'-to-5' exoribonuclease specific for small oligoribonucleotides. This Mycobacterium sp. (strain JLS) protein is Oligoribonuclease.